Consider the following 92-residue polypeptide: MPRSLKKGPFVDEHLLNKVDAQNEAGTKQVIKTWSRRSTILPDFIGHTFAVHDGRKHVPVFVEDSMVGHKLGEFAPTKTFKGHVKDDKKGRR.

The protein belongs to the universal ribosomal protein uS19 family.

Protein S19 forms a complex with S13 that binds strongly to the 16S ribosomal RNA. The protein is Small ribosomal subunit protein uS19 of Corynebacterium aurimucosum (strain ATCC 700975 / DSM 44827 / CIP 107346 / CN-1) (Corynebacterium nigricans).